Here is a 441-residue protein sequence, read N- to C-terminus: Probable cytosolic Fe-S cluster assembly factor v1g210509 (441 aa).

[4Fe-4S] cluster contacts are provided by Cys24, Cys72, Cys75, Cys78, Cys196, Cys252, and Cys401.

It belongs to the NARF family.

Functionally, component of the cytosolic iron-sulfur (Fe/S) protein assembly machinery. Required for maturation of extramitochondrial Fe/S proteins. The chain is Probable cytosolic Fe-S cluster assembly factor v1g210509 from Nematostella vectensis (Starlet sea anemone).